The sequence spans 149 residues: Putative oligosaccharyltransferase complex subunit CG9662 (149 aa).

At 1 to 32 (MIETLYNLPFHILVPPNIKVRRFSIPMPSPMA) the chain is on the cytoplasmic side. The helical transmembrane segment at 33-53 (VFSVILFSYFLVTGGIIYDVI) threads the bilayer. Over 54–83 (VEPPSLGATVDEHGHSRPVAFMPYRVNGQY) the chain is Extracellular. A helical membrane pass occupies residues 84-104 (IMEGLASSFLFTVGGLGFIIM). Residues 105–117 (DQTHTPGKTNLNR) are Cytoplasmic-facing. The chain crosses the membrane as a helical span at residues 118-138 (LLLTAMGFIFILVSFFTTWLF). Residues 139–149 (MRMKLPSYLQP) are Extracellular-facing.

It belongs to the OSTC family. In terms of assembly, component of the oligosaccharyltransferase (OST) complex.

The protein resides in the membrane. Functionally, subunit of the oligosaccharyl transferase (OST) complex that catalyzes the initial transfer of a defined glycan (Glc(3)Man(9)GlcNAc(2) in eukaryotes) from the lipid carrier dolichol-pyrophosphate to an asparagine residue within an Asn-X-Ser/Thr consensus motif in nascent polypeptide chains, the first step in protein N-glycosylation. N-glycosylation occurs cotranslationally and the complex associates with the Sec61 complex at the channel-forming translocon complex that mediates protein translocation across the endoplasmic reticulum (ER). All subunits are required for a maximal enzyme activity. This Drosophila melanogaster (Fruit fly) protein is Putative oligosaccharyltransferase complex subunit CG9662.